An 814-amino-acid chain; its full sequence is Transcription activator of gluconeogenesis PADG_03802 (814 aa).

Residues M1–R90 are disordered. Over residues S69–K83 the composition is skewed to low complexity. The zn(2)-C6 fungal-type DNA-binding region spans C97–C125. Disordered stretches follow at residues N164 to Y208, S236 to F287, A323 to I384, P442 to S461, T598 to R617, and S695 to V739. Over residues N171 to N188 the composition is skewed to low complexity. Polar residues-rich tracts occupy residues K189 to Y208, F248 to P279, G339 to P359, and G375 to I384. A compositionally biased stretch (low complexity) spans P442–Q451. The span at G720–V739 shows a compositional bias: low complexity.

This sequence belongs to the ERT1/acuK family.

It is found in the nucleus. Functionally, transcription factor which regulates nonfermentable carbon utilization. Activator of gluconeogenetic genes. The protein is Transcription activator of gluconeogenesis PADG_03802 of Paracoccidioides brasiliensis (strain Pb18).